Consider the following 1710-residue polypeptide: Phosphatidylinositol 4-phosphate 5-kinase (1710 aa).

Residues 68 to 98 form the EF-hand domain; it reads YKSIFKAFDLNNDNYLDFYEFCVAINIMLKG. Residues Asp-76, Asn-78, Asp-80, Tyr-82, and Glu-87 each contribute to the Ca(2+) site. Disordered regions lie at residues 139-255, 427-479, and 895-993; these read NNMN…DPIN, KQKK…IKSV, and GEGH…HNNN. Positions 140-235 are enriched in low complexity; the sequence is NMNGDNINGD…HNNNSHNNNN (96 aa). Positions 236–248 are enriched in polar residues; that stretch reads KAENSLGQPLNEK. Residues 427–444 show a composition bias toward basic residues; that stretch reads KQKKKKKKKKKKKKKKEK. A compositionally biased stretch (low complexity) spans 456–468; sequence SSSMENKSQNKSQ. The segment covering 902–973 has biased composition (acidic residues); it reads EEEEKNDDEE…DDNDDNDDND (72 aa). Positions 974–987 are enriched in basic and acidic residues; sequence EKSNIKIENKKDVP. The PIPK domain occupies 1334-1709; sequence QKKTFHRILA…RFVTFIENHM (376 aa).

It carries out the reaction a 1,2-diacyl-sn-glycero-3-phospho-(1D-myo-inositol 4-phosphate) + ATP = a 1,2-diacyl-sn-glycero-3-phospho-(1D-myo-inositol-4,5-bisphosphate) + ADP + H(+). Catalytic activity is increase by myristoylated ARF1. Phosphatidic acid has no effect on catalytic activity. In terms of biological role, catalyzes the phosphorylation of phosphatidylinositol 4-phosphate (PtdIns(4)P/PI4P) to form phosphatidylinositol 4,5-bisphosphate (PtdIns(4,5)P2/PIP2), a lipid second messenger that regulates several cellular processes. This Plasmodium falciparum (isolate 3D7) protein is Phosphatidylinositol 4-phosphate 5-kinase.